The chain runs to 995 residues: uncharacterized protein (995 aa).

This is an uncharacterized protein from Caenorhabditis elegans.